Reading from the N-terminus, the 141-residue chain is Ribonuclease P protein component (141 aa).

It belongs to the RnpA family. As to quaternary structure, consists of a catalytic RNA component (M1 or rnpB) and a protein subunit.

The catalysed reaction is Endonucleolytic cleavage of RNA, removing 5'-extranucleotides from tRNA precursor.. In terms of biological role, RNaseP catalyzes the removal of the 5'-leader sequence from pre-tRNA to produce the mature 5'-terminus. It can also cleave other RNA substrates such as 4.5S RNA. The protein component plays an auxiliary but essential role in vivo by binding to the 5'-leader sequence and broadening the substrate specificity of the ribozyme. The chain is Ribonuclease P protein component from Onion yellows phytoplasma (strain OY-M).